The primary structure comprises 209 residues: Ribosomal RNA large subunit methyltransferase E (209 aa).

S-adenosyl-L-methionine is bound by residues Gly63, Trp65, Asp83, Asp99, and Asp124. The active-site Proton acceptor is Lys164.

It belongs to the class I-like SAM-binding methyltransferase superfamily. RNA methyltransferase RlmE family.

It localises to the cytoplasm. It carries out the reaction uridine(2552) in 23S rRNA + S-adenosyl-L-methionine = 2'-O-methyluridine(2552) in 23S rRNA + S-adenosyl-L-homocysteine + H(+). Specifically methylates the uridine in position 2552 of 23S rRNA at the 2'-O position of the ribose in the fully assembled 50S ribosomal subunit. This is Ribosomal RNA large subunit methyltransferase E from Shewanella woodyi (strain ATCC 51908 / MS32).